Reading from the N-terminus, the 284-residue chain is Digeranylgeranylglyceryl phosphate synthase (284 aa).

7 consecutive transmembrane segments (helical) span residues 10-30 (IHNV…SSMW), 37-57 (LILA…INDV), 76-98 (AVSL…ILSA), 102-119 (YLQF…IFYA), 126-146 (GIYG…YGGL), 217-237 (LPLF…FLYI), and 260-280 (GSAF…QFLF).

It belongs to the UbiA prenyltransferase family. DGGGP synthase subfamily. The cofactor is Mg(2+).

The protein resides in the cell membrane. The catalysed reaction is sn-3-O-(geranylgeranyl)glycerol 1-phosphate + (2E,6E,10E)-geranylgeranyl diphosphate = 2,3-bis-O-(geranylgeranyl)-sn-glycerol 1-phosphate + diphosphate. Its pathway is membrane lipid metabolism; glycerophospholipid metabolism. Its function is as follows. Prenyltransferase that catalyzes the transfer of the geranylgeranyl moiety of geranylgeranyl diphosphate (GGPP) to the C2 hydroxyl of (S)-3-O-geranylgeranylglyceryl phosphate (GGGP). This reaction is the second ether-bond-formation step in the biosynthesis of archaeal membrane lipids. The polypeptide is Digeranylgeranylglyceryl phosphate synthase (Metallosphaera sedula (strain ATCC 51363 / DSM 5348 / JCM 9185 / NBRC 15509 / TH2)).